The primary structure comprises 555 residues: Glutamine--tRNA ligase (555 aa).

Residues 34-44 (PEPNGYLHIGH) carry the 'HIGH' region motif. Residues 35–37 (EPN) and 41–47 (HIGHAKS) each bind ATP. Residues aspartate 67 and tyrosine 212 each coordinate L-glutamine. ATP-binding positions include threonine 231, 261–262 (RL), and 269–271 (MSK). Positions 268–272 (VMSKR) match the 'KMSKS' region motif. The segment at 317 to 324 (TKQDNTIE) is interaction with tRNA.

Belongs to the class-I aminoacyl-tRNA synthetase family. In terms of assembly, monomer.

Its subcellular location is the cytoplasm. It catalyses the reaction tRNA(Gln) + L-glutamine + ATP = L-glutaminyl-tRNA(Gln) + AMP + diphosphate. The polypeptide is Glutamine--tRNA ligase (Salmonella schwarzengrund (strain CVM19633)).